Here is a 512-residue protein sequence, read N- to C-terminus: D-alanine--D-alanyl carrier protein ligase (512 aa).

Threonine 152–serine 153 contributes to the ATP binding site. D-alanine is bound at residue aspartate 199. Asparagine 294–threonine 299 lines the ATP pocket. Valine 303 provides a ligand contact to D-alanine. Residues aspartate 385, tyrosine 397–arginine 400, and lysine 499 each bind ATP. Position 499 (lysine 499) interacts with D-alanine.

It belongs to the ATP-dependent AMP-binding enzyme family. DltA subfamily.

The protein resides in the cytoplasm. The enzyme catalyses holo-[D-alanyl-carrier protein] + D-alanine + ATP = D-alanyl-[D-alanyl-carrier protein] + AMP + diphosphate. It participates in cell wall biogenesis; lipoteichoic acid biosynthesis. Catalyzes the first step in the D-alanylation of lipoteichoic acid (LTA), the activation of D-alanine and its transfer onto the D-alanyl carrier protein (Dcp) DltC. In an ATP-dependent two-step reaction, forms a high energy D-alanyl-AMP intermediate, followed by transfer of the D-alanyl residue as a thiol ester to the phosphopantheinyl prosthetic group of the Dcp. D-alanylation of LTA plays an important role in modulating the properties of the cell wall in Gram-positive bacteria, influencing the net charge of the cell wall. The sequence is that of D-alanine--D-alanyl carrier protein ligase from Streptococcus pyogenes serotype M1.